Here is a 20-residue protein sequence, read N- to C-terminus: Collagenolytic protease 36 kDa A (20 aa).

Residues 1 to 20 enclose the Peptidase S1 domain; sequence IVGGTEVTPGEIPYQLSLQD. The tract at residues 1 to 20 is disordered; the sequence is IVGGTEVTPGEIPYQLSLQD.

It belongs to the peptidase S1 family.

It carries out the reaction Hydrolysis of proteins, with broad specificity for peptide bonds. Native collagen is cleaved about 75% of the length of the molecule from the N-terminus. Low activity on small molecule substrates of both trypsin and chymotrypsin.. This enzyme is a serine protease capable of degrading the native triple helix of collagen. In Paralithodes camtschaticus (Red king crab), this protein is Collagenolytic protease 36 kDa A.